Consider the following 61-residue polypeptide: MATKTLKVTQTKSSIGRLPKHRASLLGLGLRRINHTVEVEDTPSVRGMINKVYYMVSVEEV.

Belongs to the universal ribosomal protein uL30 family. In terms of assembly, part of the 50S ribosomal subunit.

This chain is Large ribosomal subunit protein uL30, found in Shewanella halifaxensis (strain HAW-EB4).